The following is a 344-amino-acid chain: Thioredoxin domain-containing protein 15 (344 aa).

The first 20 residues, 1–20 (MQLLCWWQVLLWVLGLPAHG), serve as a signal peptide directing secretion. The Extracellular segment spans residues 21-305 (LEVAEDSGHP…GPLPSTLIKT (285 aa)). 2 disordered regions span residues 55 to 119 (DHRD…FGLQ) and 136 to 156 (GVTEAEPVATEDANSTDSLKS). Over residues 88–97 (EDQRSPEAHD) the composition is skewed to basic and acidic residues. The Thioredoxin domain occupies 163-280 (ERNVTGLENF…LKIFIFNQTG (118 aa)). N-linked (GlcNAc...) asparagine glycosylation is found at Asn-171, Asn-178, Asn-190, and Asn-277. The chain crosses the membrane as a helical span at residues 306-326 (VDWLLVFSLFFLISFIMYATI). The Cytoplasmic segment spans residues 327-344 (RTESIRWLIPGQEQEHAE).

The protein resides in the cell projection. Its subcellular location is the cilium membrane. Acts as a positive regulator of ciliary hedgehog signaling. Required for cilia biogenesis. This is Thioredoxin domain-containing protein 15 (Txndc15) from Mus musculus (Mouse).